A 70-amino-acid chain; its full sequence is DNA-directed RNA polymerase subunit epsilon (70 aa).

Belongs to the RNA polymerase subunit epsilon family. RNAP is composed of a core of 2 alpha, a beta and a beta' subunit. The core is associated with a delta subunit, and at least one of epsilon or omega. When a sigma factor is associated with the core the holoenzyme is formed, which can initiate transcription.

The enzyme catalyses RNA(n) + a ribonucleoside 5'-triphosphate = RNA(n+1) + diphosphate. A non-essential component of RNA polymerase (RNAP). The polypeptide is DNA-directed RNA polymerase subunit epsilon (Enterococcus faecalis (strain ATCC 700802 / V583)).